The primary structure comprises 353 residues: Quinolinate synthase (353 aa).

Iminosuccinate-binding residues include histidine 47 and serine 68. Cysteine 113 serves as a coordination point for [4Fe-4S] cluster. Residues 139–141 and serine 156 contribute to the iminosuccinate site; that span reads YAN. [4Fe-4S] cluster is bound at residue cysteine 200. Iminosuccinate is bound by residues 226-228 and threonine 243; that span reads HPE. Cysteine 297 serves as a coordination point for [4Fe-4S] cluster.

Belongs to the quinolinate synthase family. Type 1 subfamily. The cofactor is [4Fe-4S] cluster.

The protein localises to the cytoplasm. It catalyses the reaction iminosuccinate + dihydroxyacetone phosphate = quinolinate + phosphate + 2 H2O + H(+). The protein operates within cofactor biosynthesis; NAD(+) biosynthesis; quinolinate from iminoaspartate: step 1/1. In terms of biological role, catalyzes the condensation of iminoaspartate with dihydroxyacetone phosphate to form quinolinate. In Erwinia tasmaniensis (strain DSM 17950 / CFBP 7177 / CIP 109463 / NCPPB 4357 / Et1/99), this protein is Quinolinate synthase.